The chain runs to 235 residues: Iron-sulfur cluster co-chaperone protein HscB (235 aa).

The a divalent metal cation site is built by cysteine 41, cysteine 44, cysteine 58, and cysteine 61. Residues 72 to 144 form the J domain; the sequence is DYFSLMDCNR…LSRGLYLLKL (73 aa).

It belongs to the HscB family. As to quaternary structure, interacts with ISCU and HSPA9 to form an iron-sulfur transfer complex. Interacts with SDHAF1 (via the first LYR motif); the interaction recruits the iron-sulfur transfer complex composed of HSC20, HSPA9 and ISCU and mediates the incorporation of iron-sulfur clusters into SDHB which also interacts with HSC20. Interacts with the cytoplasmic form of ISCU and with CIA complex member CIAO1 (via LYR motif). Homodimer. Interacts with ISCU (cytoplasmic form); this interaction stabilizes the (Fe-S) clusters on ISCU. Interacts with the CIA complex member CIAO1 (via LYR motif). As to expression, expressed in lung, brain, stomach, spleen, ovary, testis, liver, muscle and heart.

It is found in the cytoplasm. The protein resides in the mitochondrion. The protein operates within cofactor biosynthesis; iron-sulfur cluster biosynthesis. Functionally, acts as a co-chaperone in iron-sulfur cluster assembly in mitochondria. Required for incorporation of iron-sulfur clusters into SDHB, the iron-sulfur protein subunit of succinate dehydrogenase that is involved in complex II of the mitochondrial electron transport chain. Recruited to SDHB by interaction with SDHAF1 which first binds SDHB and then recruits the iron-sulfur transfer complex formed by HSC20, HSPA9 and ISCU through direct binding to HSC20. Plays an essential role in hematopoiesis. In terms of biological role, acts as a co-chaperone in iron-sulfur cluster assembly in the cytoplasm. Also mediates complex formation between components of the cytosolic iron-sulfur biogenesis pathway and the CIA targeting complex composed of CIAO1, DIPK1B/FAM69B and MMS19 by binding directly to the scaffold protein ISCU and to CIAO1. This facilitates iron-sulfur cluster insertion into a number of cytoplasmic and nuclear proteins including POLD1, ELP3, DPYD and PPAT. This is Iron-sulfur cluster co-chaperone protein HscB from Homo sapiens (Human).